Here is an 800-residue protein sequence, read N- to C-terminus: Phenylalanine--tRNA ligase beta subunit (800 aa).

The tRNA-binding domain occupies 39 to 154 (TKDIKNLVVG…ESQVPGTDAL (116 aa)). The region spanning 408 to 483 (AFITPIDITA…RIYGYDDIPS (76 aa)) is the B5 domain. Aspartate 461, aspartate 467, glutamate 470, and glutamate 471 together coordinate Mg(2+). Positions 708–800 (PRFPGMSRDI…ALIEQGAVIR (93 aa)) constitute an FDX-ACB domain.

This sequence belongs to the phenylalanyl-tRNA synthetase beta subunit family. Type 1 subfamily. As to quaternary structure, tetramer of two alpha and two beta subunits. Mg(2+) serves as cofactor.

Its subcellular location is the cytoplasm. It catalyses the reaction tRNA(Phe) + L-phenylalanine + ATP = L-phenylalanyl-tRNA(Phe) + AMP + diphosphate + H(+). The protein is Phenylalanine--tRNA ligase beta subunit of Staphylococcus aureus (strain MRSA252).